The chain runs to 108 residues: Probable endonuclease 4 (108 aa).

Zn(2+)-binding residues include H2, H36, D49, H51, and E81.

The protein belongs to the AP endonuclease 2 family. Zn(2+) is required as a cofactor.

It carries out the reaction Endonucleolytic cleavage to 5'-phosphooligonucleotide end-products.. In terms of biological role, endonuclease IV plays a role in DNA repair. It cleaves phosphodiester bonds at apurinic or apyrimidinic (AP) sites, generating a 3'-hydroxyl group and a 5'-terminal sugar phosphate. The sequence is that of Probable endonuclease 4 (nfo) from Thermotoga neapolitana.